We begin with the raw amino-acid sequence, 418 residues long: Tyrosine--tRNA ligase 1 (418 aa).

Residue Tyr34 coordinates L-tyrosine. The 'HIGH' region motif lies at 39 to 48 (PTGDSMHIGH). L-tyrosine is bound by residues Tyr166 and Gln170. The short motif at 228–232 (KFGKT) is the 'KMSKS' region element. Lys231 provides a ligand contact to ATP. In terms of domain architecture, S4 RNA-binding spans 350-416 (KNIVDWLVDT…GKKNYFLAKV (67 aa)).

This sequence belongs to the class-I aminoacyl-tRNA synthetase family. TyrS type 1 subfamily. Homodimer.

Its subcellular location is the cytoplasm. It catalyses the reaction tRNA(Tyr) + L-tyrosine + ATP = L-tyrosyl-tRNA(Tyr) + AMP + diphosphate + H(+). Catalyzes the attachment of tyrosine to tRNA(Tyr) in a two-step reaction: tyrosine is first activated by ATP to form Tyr-AMP and then transferred to the acceptor end of tRNA(Tyr). The chain is Tyrosine--tRNA ligase 1 from Enterococcus faecalis (strain ATCC 700802 / V583).